The sequence spans 363 residues: Fructose-bisphosphate aldolase C (363 aa).

Y5 carries the post-translational modification Phosphotyrosine. Residues S36, S39, and S45 each carry the phosphoserine modification. R56 contributes to the substrate binding site. The residue at position 111 (K111) is an N6-acetyllysine. Residue K147 coordinates substrate. Catalysis depends on E188, which acts as the Proton acceptor. The active-site Schiff-base intermediate with dihydroxyacetone-P is the K230.

This sequence belongs to the class I fructose-bisphosphate aldolase family. In terms of assembly, homotetramer. Interacts with ATP6V1E1. In terms of tissue distribution, high expression in the adult brain.

It catalyses the reaction beta-D-fructose 1,6-bisphosphate = D-glyceraldehyde 3-phosphate + dihydroxyacetone phosphate. It functions in the pathway carbohydrate degradation; glycolysis; D-glyceraldehyde 3-phosphate and glycerone phosphate from D-glucose: step 4/4. The polypeptide is Fructose-bisphosphate aldolase C (Aldoc) (Rattus norvegicus (Rat)).